Reading from the N-terminus, the 569-residue chain is Nucleoprotein (569 aa).

The tract at residues 54 to 241 (MRKERRDDND…IDTKKSSLNI (188 aa)) is binding site for the cap structure m7GTP. Positions 389 and 391 each coordinate Mn(2+). Zn(2+)-binding residues include glutamate 399, cysteine 506, histidine 509, and cysteine 529. Aspartate 533 is a Mn(2+) binding site.

It belongs to the arenaviridae nucleocapsid protein family. As to quaternary structure, homomultimerizes to form the nucleocapsid. Binds to viral genomic RNA. Interacts with glycoprotein G2. Interacts with protein Z; this interaction probably directs the encapsidated genome to budding sites. Interacts with protein L; this interaction does not interfere with Z-L interaction. Interacts with host IKBKE (via Protein kinase domain); the interaction inhibits IKBKE kinase activity.

It localises to the virion. Its subcellular location is the host cytoplasm. Encapsidates the genome, protecting it from nucleases. The encapsidated genomic RNA is termed the nucleocapsid (NC). Serves as template for viral transcription and replication. The increased presence of protein N in host cell does not seem to trigger the switch from transcription to replication as observed in other negative strain RNA viruses. Through the interaction with host IKBKE, strongly inhibits the phosphorylation and nuclear translocation of host IRF3, a protein involved in interferon activation pathway, leading to the inhibition of interferon-beta and IRF3-dependent promoters activation. Also encodes a functional 3'-5' exoribonuclease that degrades preferentially dsRNA substrates and thereby participates in the suppression of interferon induction. This is Nucleoprotein from Lassa virus (strain Mouse/Sierra Leone/Josiah/1976) (LASV).